The following is a 212-amino-acid chain: Peroxiredoxin-like 2A (212 aa).

Residues 3–101 (MWSLGLGAVG…DELGVPLYAV (99 aa)) form a thioredoxin fold region. Position 74 (selenocysteine 74) is a non-standard amino acid, selenocysteine. Cysteine 77 serves as the catalytic Redox-active.

It belongs to the peroxiredoxin-like PRXL2 family. PRXL2A subfamily. As to expression, expressed in kidney marrow.

The protein localises to the cytoplasm. In terms of biological role, involved in redox regulation of the cell. Acts as an antioxidant. The sequence is that of Peroxiredoxin-like 2A (prxl2a) from Danio rerio (Zebrafish).